A 155-amino-acid chain; its full sequence is MIVKYIKGDIVALFAEGKNIAHGCNCFHTMGSGVAGQLTKAFPKILEADKLQTEWGDVTKLGSYSVYEKYFRTHKAYCFNLYTQFQPGPNFEYSALMNCMLELNEFGENKLIKPTIYMPRIGAGIGKGNWDIIEGILDTYSSKLEIVIVDWEPLL.

The Macro domain occupies 1–155 (MIVKYIKGDI…IVIVDWEPLL (155 aa)).

This is an uncharacterized protein from Escherichia coli (Bacteriophage T4).